The chain runs to 45 residues: Sperm-specific protein Phi-3 (45 aa).

Residues 1–45 (AKAKRSPRKKKAAVKKSSKSKAKKPKSPKKKKAAKKPAKKAAKKK) are disordered.

It localises to the nucleus. It is found in the chromosome. Involved in nuclear basic protein transition: histones are replaced by spermatid specific proteins which are themselves replaced by protamines in late spermatids. The polypeptide is Sperm-specific protein Phi-3 (Mytilus californianus (California mussel)).